The following is an 85-amino-acid chain: Small ribosomal subunit protein uS17 (85 aa).

Belongs to the universal ribosomal protein uS17 family. In terms of assembly, part of the 30S ribosomal subunit.

One of the primary rRNA binding proteins, it binds specifically to the 5'-end of 16S ribosomal RNA. The sequence is that of Small ribosomal subunit protein uS17 from Mesoplasma florum (strain ATCC 33453 / NBRC 100688 / NCTC 11704 / L1) (Acholeplasma florum).